The following is a 218-amino-acid chain: MASFTTNSLALRASILANPRLPPPIIRPRLSLPRKLSFNLSLHNARTIVSSAVTSSSPVLSSKPPSQFPFSDSTRSITTLVLLAGVVIKSLIQKLSVAIVNLSPQIQASFRTASPLFFASLRDRPAGYLNTPLTVVAAGLSKWLDIYSGVLMVRVLLSWFPNIPWDRQPLSAIRDLCDPYLNLFRNIIPPVFDTLDVSPLLAFAVLGTLGSILNNSRG.

A chloroplast-targeting transit peptide spans 1 to 83 (MASFTTNSLA…TRSITTLVLL (83 aa)). Transmembrane regions (helical) follow at residues 133–153 (LTVV…VLMV) and 187–207 (IIPP…AVLG).

This sequence belongs to the YggT family.

The protein resides in the plastid. It localises to the chloroplast thylakoid membrane. Its function is as follows. Not required for the biogenesis and accumulation of native cytochrome b6 in the thylakoid membrane. Not functionally involved in the pathway for covalent binding of the c-type heme to cytochrome b6. This chain is YlmG homolog protein 1-2, chloroplastic, found in Arabidopsis thaliana (Mouse-ear cress).